Reading from the N-terminus, the 1112-residue chain is Mediator of RNA polymerase II transcription subunit 14 (1112 aa).

3 disordered regions span residues 1 to 76 (MPGV…INES), 120 to 141 (SPHGQMPSTPANGKAPGDQSPE), and 1088 to 1112 (TNSAGARSSQQCDAPPEAADVITID). Positions 20 to 39 (SPDNVSSTPFPQERVNQSGD) are enriched in polar residues. A compositionally biased stretch (basic and acidic residues) spans 64–73 (IETHTGKDGI). Residues 1088-1099 (TNSAGARSSQQC) are compositionally biased toward polar residues.

This sequence belongs to the Mediator complex subunit 14 family. As to quaternary structure, component of the Mediator complex.

The protein resides in the nucleus. Functionally, component of the Mediator complex, a coactivator involved in the regulated transcription of nearly all RNA polymerase II-dependent genes. Mediator functions as a bridge to convey information from gene-specific regulatory proteins to the basal RNA polymerase II transcription machinery. Mediator is recruited to promoters by direct interactions with regulatory proteins and serves as a scaffold for the assembly of a functional preinitiation complex with RNA polymerase II and the general transcription factors. The polypeptide is Mediator of RNA polymerase II transcription subunit 14 (rgr1) (Aspergillus clavatus (strain ATCC 1007 / CBS 513.65 / DSM 816 / NCTC 3887 / NRRL 1 / QM 1276 / 107)).